We begin with the raw amino-acid sequence, 3707 residues long: CUB and sushi domain-containing protein 3 (3707 aa).

A compositionally biased stretch (basic and acidic residues) spans 1–21; the sequence is MKGSRKGESRAKESKPREPGT. The disordered stretch occupies residues 1–22; the sequence is MKGSRKGESRAKESKPREPGTR. Residues 1–42 lie on the Cytoplasmic side of the membrane; that stretch reads MKGSRKGESRAKESKPREPGTRRCAKCGRLDFILKKKMGIKS. The helical transmembrane segment at 43–63 threads the bilayer; that stretch reads GFTFWNLVFLLTLSCVKGFIY. Over 64–3630 the chain is Extracellular; that stretch reads TCGGTLKGLN…NQPHGTNSSS (3567 aa). Cystine bridges form between cysteine 65-cysteine 91, cysteine 178-cysteine 218, cysteine 204-cysteine 235, and cysteine 241-cysteine 267. One can recognise a CUB 1 domain in the interval 65-173; it reads CGGTLKGLNG…HGFKVYYEEL (109 aa). 2 N-linked (GlcNAc...) asparagine glycosylation sites follow: asparagine 73 and asparagine 90. The Sushi 1 domain maps to 176 to 237; that stretch reads SSCGNPGVPP…WDFPVPICRA (62 aa). Residues 241–345 form the CUB 2 domain; it reads CGGTMRGSSG…RGFSAPYQGS (105 aa). A disordered region spans residues 388–437; that stretch reads HRLSEEQRVQVRSLSDSGLDPNTPEDQLSPHQADTQSTSRRPRNAEQIER. Positions 411–426 are enriched in polar residues; sequence PEDQLSPHQADTQSTS. The Sushi 2 domain occupies 484 to 545; sequence NLCPDPGEPE…WSDHRPVCKV (62 aa). 6 cysteine pairs are disulfide-bonded: cysteine 486/cysteine 526, cysteine 512/cysteine 543, cysteine 548/cysteine 574, cysteine 664/cysteine 704, cysteine 690/cysteine 717, and cysteine 721/cysteine 747. Positions 548-659 constitute a CUB 3 domain; the sequence is CGSNLQGPSG…VGFKVNYKEI (112 aa). In terms of domain architecture, Sushi 3 spans 662-719; the sequence is ESCGDPGTPLYGIREGDGFSNRDVLRFECQFGFELIGEKSIVCQENNQWSANIPICIF. The 109-residue stretch at 721 to 829 folds into the CUB 4 domain; the sequence is CLSNFTAPMG…RGFNITYNTF (109 aa). Asparagine 724 and asparagine 823 each carry an N-linked (GlcNAc...) asparagine glycan. One can recognise a Sushi 4 domain in the interval 832-893; the sequence is NECPDPGIPI…WSGPIPRCGA (62 aa). 3 cysteine pairs are disulfide-bonded: cysteine 834-cysteine 875, cysteine 860-cysteine 891, and cysteine 895-cysteine 921. Residues 895-1003 enclose the CUB 5 domain; it reads CGGHFSAPSG…NGFKIHYESV (109 aa). An N-linked (GlcNAc...) asparagine glycan is attached at asparagine 966. In terms of domain architecture, Sushi 5 spans 1008–1065; sequence YSCLDPGIPVHGRRYGHDFSIGSTVSFSCDPGYRLSHEEPLLCEKNHWWSHPLPTCDA. Intrachain disulfides connect cysteine 1010/cysteine 1050, cysteine 1036/cysteine 1063, and cysteine 1067/cysteine 1093. Residues 1067–1177 form the CUB 6 domain; sequence CGGDVRGPSG…EGFNITFSEY (111 aa). N-linked (GlcNAc...) asparagine glycosylation is found at asparagine 1092, asparagine 1126, and asparagine 1171. A Sushi 6 domain is found at 1180–1239; the sequence is EPCEDPGIPQYGSRVGFSFGVGDTLTFSCSLGYRLEGSSEIICLGGGRRVWSAPLPRCVA. Cystine bridges form between cysteine 1182-cysteine 1222, cysteine 1208-cysteine 1237, and cysteine 1241-cysteine 1267. A CUB 7 domain is found at 1241-1349; the sequence is CGASATNNEG…EGFQLVYTSF (109 aa). Asparagine 1280 carries an N-linked (GlcNAc...) asparagine glycan. One can recognise a Sushi 7 domain in the interval 1352 to 1412; sequence SHCEDPGIPQ…WDYPLPSCIA (61 aa). 12 cysteine pairs are disulfide-bonded: cysteine 1354/cysteine 1395, cysteine 1381/cysteine 1410, cysteine 1414/cysteine 1441, cysteine 1528/cysteine 1568, cysteine 1554/cysteine 1584, cysteine 1588/cysteine 1614, cysteine 1701/cysteine 1741, cysteine 1727/cysteine 1758, cysteine 1762/cysteine 1788, cysteine 1878/cysteine 1918, cysteine 1904/cysteine 1935, and cysteine 1939/cysteine 1965. Residues 1414–1523 form the CUB 8 domain; sequence CGGRFKGESS…SGFAIQFSSS (110 aa). The Sushi 8 domain maps to 1526–1586; the sequence is TACRDPGVPM…WQPSPPVCIA (61 aa). Asparagine 1536 carries N-linked (GlcNAc...) asparagine glycosylation. The CUB 9 domain maps to 1588 to 1696; sequence CGGNLTGSSG…TGFHLEYKAK (109 aa). Residues asparagine 1591 and asparagine 1709 are each glycosylated (N-linked (GlcNAc...) asparagine). The 62-residue stretch at 1699 to 1760 folds into the Sushi 9 domain; sequence ESCFDPGNIM…WNRVLPSCHA (62 aa). Positions 1762–1870 constitute a CUB 10 domain; it reads CGSRSTGSEG…KGFHFVYQAV (109 aa). Asparagine 1781 carries an N-linked (GlcNAc...) asparagine glycan. In terms of domain architecture, Sushi 10 spans 1876–1937; sequence TQCSSVPEPR…WNDSLPTCIV (62 aa). Asparagine 1929 is a glycosylation site (N-linked (GlcNAc...) asparagine). One can recognise a CUB 11 domain in the interval 1939–2047; that stretch reads CGGILTKRKG…AGFHLEYTAI (109 aa). A glycan (N-linked (GlcNAc...) asparagine) is linked at asparagine 2019. A Sushi 11 domain is found at 2050-2109; the sequence is DSCPEPQTPSSGIKVGDRYMVGDVVSFQCDQGYSLQGHSHITCMPGPVRRWNYPIPICLA. Intrachain disulfides connect cysteine 2052–cysteine 2092, cysteine 2078–cysteine 2107, and cysteine 2111–cysteine 2137. The region spanning 2111 to 2219 is the CUB 12 domain; that stretch reads CGGAMSDFSG…QGFHIVYQAY (109 aa). Asparagine 2155 is a glycosylation site (N-linked (GlcNAc...) asparagine). Residues 2222–2281 form the Sushi 12 domain; that stretch reads QSCPDPRPFRNGFVIGNDFTVGQTISFECFPGYTLIGNSALTCLHGVSRNWNHPLPRCEA. 36 cysteine pairs are disulfide-bonded: cysteine 2224-cysteine 2264, cysteine 2250-cysteine 2279, cysteine 2283-cysteine 2309, cysteine 2395-cysteine 2437, cysteine 2423-cysteine 2452, cysteine 2456-cysteine 2484, cysteine 2569-cysteine 2610, cysteine 2596-cysteine 2627, cysteine 2632-cysteine 2674, cysteine 2658-cysteine 2689, cysteine 2694-cysteine 2739, cysteine 2725-cysteine 2754, cysteine 2759-cysteine 2799, cysteine 2785-cysteine 2812, cysteine 2817-cysteine 2857, cysteine 2843-cysteine 2870, cysteine 2875-cysteine 2915, cysteine 2901-cysteine 2928, cysteine 2933-cysteine 2977, cysteine 2963-cysteine 2990, cysteine 2995-cysteine 3035, cysteine 3021-cysteine 3048, cysteine 3056-cysteine 3096, cysteine 3082-cysteine 3109, cysteine 3114-cysteine 3155, cysteine 3141-cysteine 3168, cysteine 3173-cysteine 3215, cysteine 3199-cysteine 3228, cysteine 3233-cysteine 3273, cysteine 3259-cysteine 3286, cysteine 3291-cysteine 3331, cysteine 3317-cysteine 3344, cysteine 3352-cysteine 3393, cysteine 3379-cysteine 3406, cysteine 3411-cysteine 3453, and cysteine 3438-cysteine 3466. The 112-residue stretch at 2283-2394 folds into the CUB 13 domain; the sequence is CGGNITAMNG…LSYHAYQLRV (112 aa). 2 N-linked (GlcNAc...) asparagine glycosylation sites follow: asparagine 2286 and asparagine 2291. The region spanning 2393–2454 is the Sushi 13 domain; that stretch reads RVCQPPPPVP…MDGAPPVCQV (62 aa). A CUB 14 domain is found at 2456–2567; the sequence is CPANELRLDS…KGFRIRYIAF (112 aa). 15 Sushi domains span residues 2567-2629, 2630-2691, 2692-2756, 2757-2814, 2815-2872, 2873-2930, 2931-2992, 2993-3050, 3054-3111, 3112-3170, 3171-3230, 3231-3288, 3289-3346, 3350-3408, and 3409-3468; these read FYCS…ACQA, ISCG…RCVV, VTCP…YCQI, ISCG…RCLA, GHCG…SCVP, VSCG…VCKV, VNCS…ECIM, IDCG…HCSG, GTCG…ECKA, VQCG…NCTI, ISCG…TCRA, VTCS…QCLP, KFCG…HCIE, TSCE…ECIP, and HSCK…VCEA. The segment covering 3052–3065 has biased composition (low complexity); sequence TTGTCGDPGTPGHG. The interval 3052-3071 is disordered; sequence TTGTCGDPGTPGHGSRQESD. The chain crosses the membrane as a helical span at residues 3631-3651; it reads VAIAILVPFFALIFAGFGFYL. Residues 3652-3707 are Cytoplasmic-facing; the sequence is YKQRTAPKTQYTGCSVHENNNGQAAFENPMYDTNAKSVEGKAVRFDPNLNTVCTMV.

This sequence belongs to the CSMD family. As to expression, expressed in the apical dendrites of postnatal hippocampal neurons (at protein level).

It is found in the cell membrane. Functionally, involved in dendrite development. In Mus musculus (Mouse), this protein is CUB and sushi domain-containing protein 3 (Csmd3).